The chain runs to 144 residues: Large ribosomal subunit protein uL15 (144 aa).

The segment at 24–52 (GSGLGKTAGRGHKGLKSRSGGSVRPGFEG) is disordered.

This sequence belongs to the universal ribosomal protein uL15 family. Part of the 50S ribosomal subunit.

Its function is as follows. Binds to the 23S rRNA. The chain is Large ribosomal subunit protein uL15 from Cellvibrio japonicus (strain Ueda107) (Pseudomonas fluorescens subsp. cellulosa).